The sequence spans 291 residues: Malectin (291 aa).

The N-terminal stretch at 1–30 is a signal peptide; sequence MLRPRGAEGTAVALLRLLLLLLLLGPKLRG. Residues 31–268 are Lumenal-facing; the sequence is PGLGVVGAAG…TPNPYASDNS (238 aa). Positions 81, 103, 130, 131, and 200 each coordinate a carbohydrate. The tract at residues 220–264 is disordered; sequence LQPHPGLEKKEEEEEEEEYDEGSNLKRQTNKNRVQSGPRTPNPYA. The span at 230–240 shows a compositional bias: acidic residues; it reads EEEEEEEEYDE. Polar residues predominate over residues 244–264; sequence LKRQTNKNRVQSGPRTPNPYA. N-linked (GlcNAc...) asparagine glycosylation is present at N267. Residues 269-289 traverse the membrane as a helical segment; sequence SLMFPILVAFGVFIPTLFCLC. Over 290–291 the chain is Cytoplasmic; sequence RL.

The protein belongs to the malectin family. In terms of assembly, interacts with the oligosaccharyltransferase (OST) complex.

The protein localises to the endoplasmic reticulum membrane. Its function is as follows. Carbohydrate-binding protein with a strong ligand preference for Glc2-N-glycan. May play a role in the early steps of protein N-glycosylation. The protein is Malectin of Mus musculus (Mouse).